Here is a 1072-residue protein sequence, read N- to C-terminus: LRR receptor-like serine/threonine-protein kinase RGI5 (1072 aa).

The N-terminal stretch at 1–21 is a signal peptide; the sequence is MERERSNFFFLFLFCSWVSMA. Residues 22–706 lie on the Extracellular side of the membrane; the sequence is QPTLSLSSDG…NGVKSPKIVA (685 aa). A disulfide bond links C56 and C63. 25 LRR repeats span residues 66–89, 90–113, 114–138, 140–162, 164–185, 187–211, 212–234, 235–259, 260–283, 285–307, 308–331, 332–355, 356–379, 381–402, 403–427, 429–451, 452–475, 477–499, 500–523, 524–546, 548–571, 572–595, 597–619, 620–642, and 643–667; these read DNRVISVSIPDTFLNLSSIPDLSS, LSSLQFLNLSSTNLSGPIPPSFGK, LTHLRLLDLSSNSLSGPIPSELGRL, TLQFLILNANKLSGSIPSQISNL, ALQVLCLQDNLLNGSIPSSFGS, VSLQQFRLGGNTNLGGPIPAQLGFL, KNLTTLGFAASGLSGSIPSTFGN, LVNLQTLALYDTEISGTIPPQLGLC, SELRNLYLHMNKLTGSIPKELGKL, KITSLLLWGNSLSGVIPPEISNC, SSLVVFDVSANDLTGDIPGDLGKL, VWLEQLQLSDNMFTGQIPWELSNC, SSLIALQLDKNKLSGSIPSQIGNL, SLQSFFLWENSISGTIPSSFGN, CTDLVALDLSRNKLTGRIPEELFSL, RLSKLLLLGNSLSGGLPKSVAKC, QSLVRLRVGENQLSGQIPKEIGEL, NLVFLDLYMNHFSGGLPYEISNI, TVLELLDVHNNYITGDIPAQLGNL, VNLEQLDLSRNSFTGNIPLSFGN, SYLNKLILNNNLLTGQIPKSIKNL, QKLTLLDLSYNSLSGEIPQELGQV, SLTINLDLSYNTFTGNIPETFSD, LTQLQSLDLSSNSLHGDIKVLGS, and LTSLASLNISCNNFSGPIPSTPFFK. N-linked (GlcNAc...) asparagine glycans are attached at residues N80, N97, and N102. The short motif at 171–172 is the Small peptide recognition element; it reads QD. N176 is a glycosylation site (N-linked (GlcNAc...) asparagine). The short motif at 193–196 is the Small peptide recognition element; that stretch reads RLGG. N213 carries N-linked (GlcNAc...) asparagine glycosylation. 3 short sequence motifs (small peptide recognition) span residues 216 to 221, Y244, and 266 to 268; these read TLGFAA and YLH. N306 carries N-linked (GlcNAc...) asparagine glycosylation. Short sequence motifs (small peptide recognition) lie at residues 314–317 and 336–338; these read DVSA and QLQ. N-linked (GlcNAc...) asparagine glycosylation occurs at N354. A Small peptide recognition motif is present at residues 384–388; it reads SFFLW. An N-linked (GlcNAc...) asparagine glycan is attached at N402. Short sequence motifs (small peptide recognition) lie at residues 410–413, 432–436, and 456–458; these read DLSR, KLLLL, and RLR. N498 is a glycosylation site (N-linked (GlcNAc...) asparagine). A glycan (N-linked (GlcNAc...) asparagine) is linked at N546. 2 N-linked (GlcNAc...) asparagine glycosylation sites follow: N650 and N655. The helical transmembrane segment at 707 to 727 threads the bilayer; that stretch reads LTAVILASITIAILAAWLLIL. Topologically, residues 728–1072 are cytoplasmic; that stretch reads RNNHLYKTSQ…SQPLIKPSSS (345 aa). A Phosphothreonine modification is found at T764. A Protein kinase domain is found at 772-1067; it reads LTDENVIGKG…EWGKTSQPLI (296 aa). ATP is bound by residues 778–786 and K800; that span reads IGKGCSGIV. Y851 and Y887 each carry phosphotyrosine. Residue D900 is the Proton acceptor of the active site. S936 carries the phosphoserine modification. 2 positions are modified to phosphotyrosine: Y944 and Y951. A Phosphothreonine modification is found at T952.

Belongs to the protein kinase superfamily. Ser/Thr protein kinase family. In terms of assembly, binds to RGF1; this interaction triggers the formation of heterodimers with SERK1. Phosphorylated and ubiquitinated upon interaction with RGF1, thus leading to activation a subsequent degradation. Post-translationally, autophosphorylated. In terms of tissue distribution, expressed in roots and hypocotyls.

Its subcellular location is the membrane. It catalyses the reaction L-seryl-[protein] + ATP = O-phospho-L-seryl-[protein] + ADP + H(+). The enzyme catalyses L-threonyl-[protein] + ATP = O-phospho-L-threonyl-[protein] + ADP + H(+). In terms of biological role, together with RGI1, RGI2, RGI3 and RGI4, acts as a receptor of RGF1, a peptide hormone that maintains the postembryonic root stem cell niche by regulating the expression levels and patterns of the transcription factor PLETHORA (PLT). Links RGF1 signal with its downstream components. The sequence is that of LRR receptor-like serine/threonine-protein kinase RGI5 from Arabidopsis thaliana (Mouse-ear cress).